A 102-amino-acid polypeptide reads, in one-letter code: Small ribosomal subunit protein uS10 (102 aa).

This sequence belongs to the universal ribosomal protein uS10 family. As to quaternary structure, part of the 30S ribosomal subunit.

Involved in the binding of tRNA to the ribosomes. This Bifidobacterium longum subsp. infantis (strain ATCC 15697 / DSM 20088 / JCM 1222 / NCTC 11817 / S12) protein is Small ribosomal subunit protein uS10.